Consider the following 968-residue polypeptide: Probable transport protein MmpL2 (968 aa).

11 helical membrane-spanning segments follow: residues 22 to 42 (FAVV…LAVP), 204 to 224 (VIAA…LVLI), 245 to 265 (IFSL…AAST), 297 to 317 (AHVI…LSFA), 328 to 348 (PIAI…PAVL), 378 to 398 (WPGP…LALP), 763 to 783 (YDLL…MMII), 787 to 807 (VVAA…SFGL), 815 to 835 (ILGI…LLAV), 866 to 886 (TGGV…LFVF), and 890 to 910 (RIIG…TLVV).

Belongs to the resistance-nodulation-cell division (RND) (TC 2.A.6) family. MmpL subfamily.

It is found in the cell membrane. The sequence is that of Probable transport protein MmpL2 (mmpL2) from Mycobacterium tuberculosis (strain CDC 1551 / Oshkosh).